Reading from the N-terminus, the 283-residue chain is Nucleotide-binding protein IL0393 (283 aa).

An ATP-binding site is contributed by 8 to 15; it reads GRSGSGKT. Position 56–59 (56–59) interacts with GTP; it reads DVRN.

The protein belongs to the RapZ-like family.

In terms of biological role, displays ATPase and GTPase activities. This is Nucleotide-binding protein IL0393 from Idiomarina loihiensis (strain ATCC BAA-735 / DSM 15497 / L2-TR).